Here is a 360-residue protein sequence, read N- to C-terminus: G-protein coupled receptor 183 (360 aa).

Over 1–30 (MDIKMDNFTTPSAASLESDCDLYAHHHTAR) the chain is Extracellular. N-linked (GlcNAc...) asparagine glycosylation is present at asparagine 7. Residues 31 to 56 (ILMPLHYSIVFIIGLVGNLLALIVII) form a helical membrane-spanning segment. The Cytoplasmic segment spans residues 57 to 76 (QNRKKINSTTLYSTNLVISD). The helical transmembrane segment at 77–94 (ILFTTALPTRIAYYALGF) threads the bilayer. 7alpha,25-dihydroxycholesterol is bound at residue arginine 86. The Extracellular portion of the chain corresponds to 95-104 (DWRIGDALCR). An intrachain disulfide couples cysteine 103 to cysteine 180. Residues 105-126 (ITALVFYINTYAGVNFMTCLSI) form a helical membrane-spanning segment. Residues tyrosine 111 and tyrosine 115 each contribute to the 7alpha,25-dihydroxycholesterol site. An interaction with G proteins region spans residues 125–133 (SIDRFFAVV). Residues 127 to 148 (DRFFAVVHPLRYNKIKRIEHAK) lie on the Cytoplasmic side of the membrane. Residues 149 to 167 (CICIFVWILVFGQTLPLLI) traverse the membrane as a helical segment. Residues 168–191 (NPMSKQEAERTTCMEYPNFEETKS) lie on the Extracellular side of the membrane. A helical transmembrane segment spans residues 192–214 (LPWILLGACFIGYVLPLVIILIC). Residues 215–240 (YSQICCKLFKTAKQNPLTEKSGVNKK) lie on the Cytoplasmic side of the membrane. A helical transmembrane segment spans residues 241-264 (ALNTIIFIIVVFVVCFTPYHVAII). Tyrosine 259 is a 7alpha,25-dihydroxycholesterol binding site. The Extracellular portion of the chain corresponds to 265–286 (QHMIKKLRLPGLLECSQRHSFQ). The chain crosses the membrane as a helical span at residues 287–311 (ISLHFTVCLMNFNCCMDPFIYFFAC). Residues 312–360 (KGYKRKVMKMLKRQVSVSISSAVRSAPEENSREMTETQMMIHSKSLNGK) are Cytoplasmic-facing. Serine 327 is subject to Phosphoserine. The tract at residues 339–360 (EENSREMTETQMMIHSKSLNGK) is disordered. Residues 347-360 (ETQMMIHSKSLNGK) are compositionally biased toward polar residues.

The protein belongs to the G-protein coupled receptor 1 family. As to quaternary structure, homodimer and heterodimer. Heterodimerizes with CXCR5; leading to modulate the interaction between of CXCL13 and CXCR5.

It is found in the cell membrane. Functionally, G-protein coupled receptor expressed in lymphocytes that acts as a chemotactic receptor for B-cells, T-cells, splenic dendritic cells, monocytes/macrophages and astrocytes. Receptor for oxysterol 7-alpha,25-dihydroxycholesterol (7-alpha,25-OHC) and other related oxysterols. Mediates cell positioning and movement of a number of cells by binding the 7-alpha,25-OHC ligand that forms a chemotactic gradient. Binding of 7-alpha,25-OHC mediates the correct localization of B-cells during humoral immune responses. Guides B-cell movement along the B-cell zone-T-cell zone boundary and later to interfollicular and outer follicular regions. Its specific expression during B-cell maturation helps position B-cells appropriately for mounting T-dependent antibody responses. Collaborates with CXCR5 to mediate B-cell migration; probably by forming a heterodimer with CXCR5 that affects the interaction between of CXCL13 and CXCR5. Also acts as a chemotactic receptor for some T-cells upon binding to 7-alpha,25-OHC ligand. Promotes follicular helper T (Tfh) cells differentiation by positioning activated T-cells at the follicle-T-zone interface, promoting contact of newly activated CD4 T-cells with activated dendritic cells and exposing them to Tfh-cell-promoting inducible costimulator (ICOS) ligand. Expression in splenic dendritic cells is required for their homeostasis, localization and ability to induce B- and T-cell responses: GPR183 acts as a chemotactic receptor in dendritic cells that mediates the accumulation of CD4(+) dendritic cells in bridging channels. Regulates migration of astrocytes and is involved in communication between astrocytes and macrophages. Promotes osteoclast precursor migration to bone surfaces. Signals constitutively through G(i)-alpha, but not G(s)-alpha or G(q)-alpha. Signals constitutively also via MAPK1/3 (ERK1/2). This is G-protein coupled receptor 183 (GPR183) from Bos taurus (Bovine).